A 305-amino-acid polypeptide reads, in one-letter code: Superkiller complex protein 8 (305 aa).

WD repeat units lie at residues 14–57, 62–101, 104–143, 146–187, 188–227, 230–269, and 272–305; these read AHED…LELQ, GHQL…QIRA, AGPV…KEYS, TRGK…HTLE, GHAM…LAAT, GHGS…CVHT, and DHQD…DCPI.

The protein belongs to the SKI8 family. Component of the PAF1 complex. Component of the SKI complex.

It is found in the nucleus. Its subcellular location is the cytoplasm. Its function is as follows. Component of the PAF1 complex (PAF1C) which has multiple functions during transcription by RNA polymerase II and is implicated in regulation of development and maintenance of embryonic stem cell pluripotency. PAF1C associates with RNA polymerase II through interaction with POLR2A CTD non-phosphorylated and 'Ser-2'- and 'Ser-5'-phosphorylated forms and is involved in transcriptional elongation, acting both independently and synergistically with TCEA1 and in cooperation with the DSIF complex and HTATSF1. Also acts as a component of the SKI complex, a multiprotein complex that assists the RNA-degrading exosome during the mRNA decay and quality-control pathways. The SKI complex catalyzes mRNA extraction from 80S ribosomal complexes in the 3'-5' direction and channels mRNA to the cytosolic exosome for degradation. The polypeptide is Superkiller complex protein 8 (skic8) (Xenopus tropicalis (Western clawed frog)).